The primary structure comprises 371 residues: Carbamoyl phosphate synthase small chain (371 aa).

The interval 1–186 (MDYYNNDTPG…IHQGKTGDVV (186 aa)) is CPSase. Positions 52, 233, and 235 each coordinate L-glutamine. A Glutamine amidotransferase type-1 domain is found at 185 to 371 (VVVVVDCGIK…KFKKMVVGDA (187 aa)). The Nucleophile role is filled by Cys-261. L-glutamine contacts are provided by Leu-262, Gln-265, Asn-303, Gly-305, and Tyr-306. Active-site residues include His-346 and Glu-348.

The protein belongs to the CarA family. In terms of assembly, composed of two chains; the small (or glutamine) chain promotes the hydrolysis of glutamine to ammonia, which is used by the large (or ammonia) chain to synthesize carbamoyl phosphate. Tetramer of heterodimers (alpha,beta)4.

The enzyme catalyses hydrogencarbonate + L-glutamine + 2 ATP + H2O = carbamoyl phosphate + L-glutamate + 2 ADP + phosphate + 2 H(+). It carries out the reaction L-glutamine + H2O = L-glutamate + NH4(+). It functions in the pathway amino-acid biosynthesis; L-arginine biosynthesis; carbamoyl phosphate from bicarbonate: step 1/1. The protein operates within pyrimidine metabolism; UMP biosynthesis via de novo pathway; (S)-dihydroorotate from bicarbonate: step 1/3. Functionally, small subunit of the glutamine-dependent carbamoyl phosphate synthetase (CPSase). CPSase catalyzes the formation of carbamoyl phosphate from the ammonia moiety of glutamine, carbonate, and phosphate donated by ATP, constituting the first step of 2 biosynthetic pathways, one leading to arginine and/or urea and the other to pyrimidine nucleotides. The small subunit (glutamine amidotransferase) binds and cleaves glutamine to supply the large subunit with the substrate ammonia. In Sulfolobus acidocaldarius (strain ATCC 33909 / DSM 639 / JCM 8929 / NBRC 15157 / NCIMB 11770), this protein is Carbamoyl phosphate synthase small chain.